We begin with the raw amino-acid sequence, 573 residues long: DNA ligase (573 aa).

Glu250 serves as a coordination point for ATP. The active-site N6-AMP-lysine intermediate is the Lys252. Arg257, Arg272, Glu301, Phe342, Arg432, and Lys438 together coordinate ATP.

It belongs to the ATP-dependent DNA ligase family. Mg(2+) serves as cofactor.

The catalysed reaction is ATP + (deoxyribonucleotide)n-3'-hydroxyl + 5'-phospho-(deoxyribonucleotide)m = (deoxyribonucleotide)n+m + AMP + diphosphate.. DNA ligase that seals nicks in double-stranded DNA during DNA replication, DNA recombination and DNA repair. This chain is DNA ligase, found in Methanococcus maripaludis (strain C6 / ATCC BAA-1332).